A 297-amino-acid polypeptide reads, in one-letter code: Acetylglutamate kinase (297 aa).

Substrate contacts are provided by residues 72–73 (GG), R94, and N193.

It belongs to the acetylglutamate kinase family. ArgB subfamily.

It localises to the cytoplasm. The enzyme catalyses N-acetyl-L-glutamate + ATP = N-acetyl-L-glutamyl 5-phosphate + ADP. The protein operates within amino-acid biosynthesis; L-arginine biosynthesis; N(2)-acetyl-L-ornithine from L-glutamate: step 2/4. Functionally, catalyzes the ATP-dependent phosphorylation of N-acetyl-L-glutamate. The protein is Acetylglutamate kinase of Mycobacterium leprae (strain TN).